A 257-amino-acid polypeptide reads, in one-letter code: Gene 3 protein (257 aa).

Positions 163–176 (STENLLGQTQSSTH) are enriched in polar residues. Residues 163–257 (STENLLGQTQ…SDSSVSSVFF (95 aa)) form a disordered region. The segment covering 214–240 (SIREETVSGMARAREECNSPSEHDRLT) has biased composition (basic and acidic residues).

This is Gene 3 protein from Equine herpesvirus 1 (strain Ab4p) (EHV-1).